Here is a 419-residue protein sequence, read N- to C-terminus: UDP-N-acetylglucosamine 1-carboxyvinyltransferase (419 aa).

Position 22 to 23 (22 to 23 (KN)) interacts with phosphoenolpyruvate. Residue R95 coordinates UDP-N-acetyl-alpha-D-glucosamine. The active-site Proton donor is the C119. Position 119 is a 2-(S-cysteinyl)pyruvic acid O-phosphothioketal (C119). Residues 164 to 167 (KVSV), D308, and I330 each bind UDP-N-acetyl-alpha-D-glucosamine.

It belongs to the EPSP synthase family. MurA subfamily.

The protein localises to the cytoplasm. The catalysed reaction is phosphoenolpyruvate + UDP-N-acetyl-alpha-D-glucosamine = UDP-N-acetyl-3-O-(1-carboxyvinyl)-alpha-D-glucosamine + phosphate. It participates in cell wall biogenesis; peptidoglycan biosynthesis. In terms of biological role, cell wall formation. Adds enolpyruvyl to UDP-N-acetylglucosamine. The polypeptide is UDP-N-acetylglucosamine 1-carboxyvinyltransferase (Rickettsia felis (strain ATCC VR-1525 / URRWXCal2) (Rickettsia azadi)).